Reading from the N-terminus, the 141-residue chain is Hemoglobin subunit alpha-D (141 aa).

Residues 1–141 (MLTAEDKKLI…VAAVLAEKYR (141 aa)) enclose the Globin domain. Positions 58 and 87 each coordinate heme b.

It belongs to the globin family. Heterotetramer of two alpha-D chains and two beta chains. Red blood cells.

Involved in oxygen transport from the lung to the various peripheral tissues. The protein is Hemoglobin subunit alpha-D (HBAD) of Cairina moschata (Muscovy duck).